We begin with the raw amino-acid sequence, 399 residues long: S-adenosylmethionine synthase (399 aa).

His17 contributes to the ATP binding site. Asp19 is a Mg(2+) binding site. Glu45 lines the K(+) pocket. Residues Glu58 and Gln101 each coordinate L-methionine. The flexible loop stretch occupies residues 101–111 (QSADIAMGVDQ). ATP contacts are provided by residues 177–179 (DGK), 244–245 (RF), Asp253, 259–260 (RK), Ala276, and Lys280. Asp253 contacts L-methionine. L-methionine is bound at residue Lys284.

This sequence belongs to the AdoMet synthase family. In terms of assembly, homotetramer; dimer of dimers. The cofactor is Mg(2+). It depends on K(+) as a cofactor.

The protein resides in the cytoplasm. The enzyme catalyses L-methionine + ATP + H2O = S-adenosyl-L-methionine + phosphate + diphosphate. Its pathway is amino-acid biosynthesis; S-adenosyl-L-methionine biosynthesis; S-adenosyl-L-methionine from L-methionine: step 1/1. Catalyzes the formation of S-adenosylmethionine (AdoMet) from methionine and ATP. The overall synthetic reaction is composed of two sequential steps, AdoMet formation and the subsequent tripolyphosphate hydrolysis which occurs prior to release of AdoMet from the enzyme. This Bacillus cereus (strain ATCC 10987 / NRS 248) protein is S-adenosylmethionine synthase.